A 418-amino-acid chain; its full sequence is Putative ion-transport protein YfeO (418 aa).

A run of 12 helical transmembrane segments spans residues 10 to 30 (LLLS…LIVV), 54 to 74 (DSPL…GLVI), 99 to 119 (ALPG…SLGP), 120 to 140 (EHPI…RLLP), 149 to 169 (ILAS…AALI), 186 to 206 (LFAP…FFHP), 223 to 243 (ILSG…AVWC), 258 to 278 (VLVL…GGPV), 300 to 320 (DYFL…ASGF), 322 to 342 (GGRI…LHEH), 343 to 363 (VPAV…VLVV), and 371 to 391 (LFMA…CIVM).

The protein belongs to the chloride channel (TC 2.A.49) family.

It is found in the cell membrane. In Escherichia coli O8 (strain IAI1), this protein is Putative ion-transport protein YfeO.